The chain runs to 177 residues: Inner membrane-spanning protein YciB (177 aa).

The next 5 helical transmembrane spans lie at 22–42 (IFIASKSLIFISGLTCLLYWI), 50–70 (INLFSFITIAIFGSLTIIFHN), 76–96 (WKITIIYMIFSVILFISQFFM), 121–141 (FFWALFFLFCSILNIYVALCL), and 151–171 (VFGLSFLMFLSILITSIYINF).

Belongs to the YciB family.

It localises to the cell inner membrane. Its function is as follows. Plays a role in cell envelope biogenesis, maintenance of cell envelope integrity and membrane homeostasis. The sequence is that of Inner membrane-spanning protein YciB from Buchnera aphidicola subsp. Schizaphis graminum (strain Sg).